A 214-amino-acid chain; its full sequence is GTP cyclohydrolase 1 (214 aa).

Residues Cys101, His104, and Cys172 each coordinate Zn(2+).

Belongs to the GTP cyclohydrolase I family. In terms of assembly, toroid-shaped homodecamer, composed of two pentamers of five dimers.

The enzyme catalyses GTP + H2O = 7,8-dihydroneopterin 3'-triphosphate + formate + H(+). It functions in the pathway cofactor biosynthesis; 7,8-dihydroneopterin triphosphate biosynthesis; 7,8-dihydroneopterin triphosphate from GTP: step 1/1. This Gloeobacter violaceus (strain ATCC 29082 / PCC 7421) protein is GTP cyclohydrolase 1.